The chain runs to 185 residues: MQSTRKTNQLAIPDLSGKVTIGDLLEAFSSYEKEIISIKLSKQRRSRDEDLKVGYVEFETVEDTEKAYGEGSVKVAGEAKALHYAKRKDQRMKERVIVSSKKVYISGIPEDTDKDELSALLGNCRISGGDKGKNYLFAEYDNSEEQERALSKINNMKIKGSKLFAMPAYEKANIGRIGRRKGDFN.

2 consecutive RRM domains span residues 8-87 (NQLA…YAKR) and 101-170 (KKVY…PAYE).

The sequence is that of RRM domain-containing protein ECU09_1470 from Encephalitozoon cuniculi (strain GB-M1) (Microsporidian parasite).